The following is a 200-amino-acid chain: Lipopolysaccharide core heptose(II)-phosphate phosphatase (200 aa).

Residues 1–25 form the signal peptide; the sequence is MLAFCRSSLKSKKYIIILLALAAIA.

This sequence belongs to the phosphoglycerate mutase family. Ais subfamily.

It is found in the periplasm. Its pathway is bacterial outer membrane biogenesis; lipopolysaccharide metabolism. Catalyzes the dephosphorylation of heptose(II) of the outer membrane lipopolysaccharide core. This chain is Lipopolysaccharide core heptose(II)-phosphate phosphatase, found in Escherichia coli (strain ATCC 8739 / DSM 1576 / NBRC 3972 / NCIMB 8545 / WDCM 00012 / Crooks).